A 114-amino-acid polypeptide reads, in one-letter code: Nucleoid-associated protein Clos_2855 (114 aa).

Belongs to the YbaB/EbfC family. As to quaternary structure, homodimer.

The protein resides in the cytoplasm. Its subcellular location is the nucleoid. Its function is as follows. Binds to DNA and alters its conformation. May be involved in regulation of gene expression, nucleoid organization and DNA protection. This Alkaliphilus oremlandii (strain OhILAs) (Clostridium oremlandii (strain OhILAs)) protein is Nucleoid-associated protein Clos_2855.